A 381-amino-acid polypeptide reads, in one-letter code: Succinyl-diaminopimelate desuccinylase (381 aa).

Histidine 69 is a binding site for Zn(2+). The active site involves aspartate 71. Aspartate 103 contacts Zn(2+). The active-site Proton acceptor is glutamate 137. 3 residues coordinate Zn(2+): glutamate 138, glutamate 166, and histidine 355.

Belongs to the peptidase M20A family. DapE subfamily. Homodimer. Zn(2+) serves as cofactor. The cofactor is Co(2+).

The enzyme catalyses N-succinyl-(2S,6S)-2,6-diaminopimelate + H2O = (2S,6S)-2,6-diaminopimelate + succinate. The protein operates within amino-acid biosynthesis; L-lysine biosynthesis via DAP pathway; LL-2,6-diaminopimelate from (S)-tetrahydrodipicolinate (succinylase route): step 3/3. Functionally, catalyzes the hydrolysis of N-succinyl-L,L-diaminopimelic acid (SDAP), forming succinate and LL-2,6-diaminopimelate (DAP), an intermediate involved in the bacterial biosynthesis of lysine and meso-diaminopimelic acid, an essential component of bacterial cell walls. This is Succinyl-diaminopimelate desuccinylase from Rickettsia africae (strain ESF-5).